The primary structure comprises 378 residues: Chaperone protein DnaJ (378 aa).

Residues 5-70 enclose the J domain; that stretch reads DYYEVLGVAK…QKRAAYDQYG (66 aa). The segment at 138–216 adopts a CR-type zinc-finger fold; the sequence is GYDTQIRVPS…CHGSGKVKET (79 aa). Cys151, Cys154, Cys168, Cys171, Cys190, Cys193, Cys204, and Cys207 together coordinate Zn(2+). 4 CXXCXGXG motif repeats span residues 151 to 158, 168 to 175, 190 to 197, and 204 to 211; these read CEVCHGSG, CPTCHGQG, CPKCHGTG, and CAHCHGSG.

The protein belongs to the DnaJ family. In terms of assembly, homodimer. Requires Zn(2+) as cofactor.

It localises to the cytoplasm. In terms of biological role, participates actively in the response to hyperosmotic and heat shock by preventing the aggregation of stress-denatured proteins and by disaggregating proteins, also in an autonomous, DnaK-independent fashion. Unfolded proteins bind initially to DnaJ; upon interaction with the DnaJ-bound protein, DnaK hydrolyzes its bound ATP, resulting in the formation of a stable complex. GrpE releases ADP from DnaK; ATP binding to DnaK triggers the release of the substrate protein, thus completing the reaction cycle. Several rounds of ATP-dependent interactions between DnaJ, DnaK and GrpE are required for fully efficient folding. Also involved, together with DnaK and GrpE, in the DNA replication of plasmids through activation of initiation proteins. In Burkholderia vietnamiensis (strain G4 / LMG 22486) (Burkholderia cepacia (strain R1808)), this protein is Chaperone protein DnaJ.